The following is a 148-amino-acid chain: Deoxyuridine 5'-triphosphate nucleotidohydrolase (148 aa).

Substrate contacts are provided by residues 68–70, Asn81, 85–87, and Lys95; these read RSG and TID.

This sequence belongs to the dUTPase family. It depends on Mg(2+) as a cofactor.

It catalyses the reaction dUTP + H2O = dUMP + diphosphate + H(+). The protein operates within pyrimidine metabolism; dUMP biosynthesis; dUMP from dCTP (dUTP route): step 2/2. Functionally, this enzyme is involved in nucleotide metabolism: it produces dUMP, the immediate precursor of thymidine nucleotides and it decreases the intracellular concentration of dUTP so that uracil cannot be incorporated into DNA. The polypeptide is Deoxyuridine 5'-triphosphate nucleotidohydrolase (Rickettsia felis (strain ATCC VR-1525 / URRWXCal2) (Rickettsia azadi)).